The chain runs to 499 residues: Pyruvate kinase 2 (499 aa).

Residue Arg50 coordinates substrate. Positions 52, 54, 84, and 85 each coordinate K(+). 52–55 lines the ATP pocket; the sequence is NFSH. ATP is bound at residue Arg91. Glu241 provides a ligand contact to Mg(2+). Substrate contacts are provided by Gly264, Asp265, and Thr297. Asp265 provides a ligand contact to Mg(2+).

This sequence belongs to the pyruvate kinase family. Homotetramer. It depends on Mg(2+) as a cofactor. Requires K(+) as cofactor.

The catalysed reaction is pyruvate + ATP = phosphoenolpyruvate + ADP + H(+). Its pathway is carbohydrate degradation; glycolysis; pyruvate from D-glyceraldehyde 3-phosphate: step 5/5. Activated by fructose 2,6-bisphosphate, activated by the effector in a cooperative manner. This chain is Pyruvate kinase 2 (PYK2), found in Trypanosoma brucei brucei.